The sequence spans 348 residues: Dihydroorotase (348 aa).

Positions 17 and 19 each coordinate Zn(2+). Residues 19–21 (HLR) and N45 each bind substrate. Residues K103, H140, and H178 each coordinate Zn(2+). An N6-carboxylysine modification is found at K103. Residue H140 participates in substrate binding. Residue L223 participates in substrate binding. Residue D251 participates in Zn(2+) binding. D251 is an active-site residue. Residues H255 and A267 each coordinate substrate.

It belongs to the metallo-dependent hydrolases superfamily. DHOase family. Class II DHOase subfamily. Homodimer. Requires Zn(2+) as cofactor.

It carries out the reaction (S)-dihydroorotate + H2O = N-carbamoyl-L-aspartate + H(+). The protein operates within pyrimidine metabolism; UMP biosynthesis via de novo pathway; (S)-dihydroorotate from bicarbonate: step 3/3. In terms of biological role, catalyzes the reversible cyclization of carbamoyl aspartate to dihydroorotate. This is Dihydroorotase from Escherichia coli (strain SMS-3-5 / SECEC).